We begin with the raw amino-acid sequence, 429 residues long: C4-dicarboxylate transport protein (429 aa).

8 helical membrane passes run 9–29 (VLYV…HYYP), 45–65 (LIKM…IAGM), 79–99 (LLYF…ATHI), 149–169 (GEIL…AHLG), 185–205 (VLFG…FGAM), 223–243 (LIGT…GTIA), 308–328 (IYMT…LTWM), and 356–376 (AATL…ILGI).

It belongs to the dicarboxylate/amino acid:cation symporter (DAACS) (TC 2.A.23) family.

Its subcellular location is the cell inner membrane. Its function is as follows. Responsible for the transport of dicarboxylates such as succinate, fumarate, and malate from the periplasm across the membrane. In Burkholderia lata (strain ATCC 17760 / DSM 23089 / LMG 22485 / NCIMB 9086 / R18194 / 383), this protein is C4-dicarboxylate transport protein.